We begin with the raw amino-acid sequence, 515 residues long: Putative BTB/POZ domain-containing protein At3g49970 (515 aa).

The 63-residue stretch at 1–63 folds into the BTB domain; sequence MLEKLSFLLH…CYDISFEINT (63 aa). One can recognise an NPH3 domain in the interval 149–409; sequence DWWADDLAVL…NSDSPAPATA (261 aa). Tyrosine 350 bears the Phosphotyrosine mark. The interval 395–417 is disordered; the sequence is QENLSNSDSPAPATAEKTLSPPE. Residues 418 to 452 are a coiled coil; that stretch reads LSSYKNELSKLNRENQYLKLELLKVKMKFKELEKE. The tract at residues 494–515 is disordered; the sequence is INPFGLKQGQTKQPKSRRHSIS.

Belongs to the NPH3 family.

It functions in the pathway protein modification; protein ubiquitination. Functionally, may act as a substrate-specific adapter of an E3 ubiquitin-protein ligase complex (CUL3-RBX1-BTB) which mediates the ubiquitination and subsequent proteasomal degradation of target proteins. This chain is Putative BTB/POZ domain-containing protein At3g49970, found in Arabidopsis thaliana (Mouse-ear cress).